Reading from the N-terminus, the 129-residue chain is Large ribosomal subunit protein bL17 (129 aa).

This sequence belongs to the bacterial ribosomal protein bL17 family. Part of the 50S ribosomal subunit. Contacts protein L32.

The polypeptide is Large ribosomal subunit protein bL17 (Polynucleobacter asymbioticus (strain DSM 18221 / CIP 109841 / QLW-P1DMWA-1) (Polynucleobacter necessarius subsp. asymbioticus)).